A 219-amino-acid polypeptide reads, in one-letter code: MTNILIVEDEQNLARFIELELTHENYTVDIENDGKAGLDKALSKPYDLYILDLMLPNINGLEICRQIRQKTTTPIIIITAKSETYDKVAGLDYGADDYIVKPFDIEELLARIRAVLRRQPDKDVLDINGIIIDKDAFKVTVNGHQLELTKTEYDLLYVLAENRNHVMQREQILDHVWGYNSEVETNVVDVYIRYLRNKLKPFNKEKSIETVRGVGYVIR.

The 114-residue stretch at 3–116 folds into the Response regulatory domain; it reads NILIVEDEQN…ELLARIRAVL (114 aa). Asp52 is modified (4-aspartylphosphate). A DNA-binding region (ompR/PhoB-type) is located at residues 122 to 219; it reads KDVLDINGII…TVRGVGYVIR (98 aa).

In terms of processing, phosphorylated by ArlS.

Its subcellular location is the cytoplasm. Its function is as follows. Member of the two-component regulatory system ArlS/ArlR. In Staphylococcus epidermidis (strain ATCC 35984 / DSM 28319 / BCRC 17069 / CCUG 31568 / BM 3577 / RP62A), this protein is Response regulator ArlR (arlR).